The primary structure comprises 122 residues: Small ribosomal subunit protein uS13 (122 aa).

Residues 95–122 (QLPVRGQRTHTNARTRKGKAKPIAGKKK) are disordered.

Belongs to the universal ribosomal protein uS13 family. Part of the 30S ribosomal subunit. Forms a loose heterodimer with protein S19. Forms two bridges to the 50S subunit in the 70S ribosome.

Located at the top of the head of the 30S subunit, it contacts several helices of the 16S rRNA. In the 70S ribosome it contacts the 23S rRNA (bridge B1a) and protein L5 of the 50S subunit (bridge B1b), connecting the 2 subunits; these bridges are implicated in subunit movement. Contacts the tRNAs in the A and P-sites. The sequence is that of Small ribosomal subunit protein uS13 from Beijerinckia indica subsp. indica (strain ATCC 9039 / DSM 1715 / NCIMB 8712).